Consider the following 211-residue polypeptide: Thymidylate kinase (211 aa).

ATP is bound at residue 7–14; sequence GIDASGKS.

This sequence belongs to the thymidylate kinase family.

It catalyses the reaction dTMP + ATP = dTDP + ADP. Its function is as follows. Phosphorylation of dTMP to form dTDP in both de novo and salvage pathways of dTTP synthesis. The protein is Thymidylate kinase of Mesomycoplasma hyopneumoniae (strain 232) (Mycoplasma hyopneumoniae).